The sequence spans 862 residues: DNA replication licensing factor MCM4 (862 aa).

The segment covering 1-10 (MSSPASTPSR) has biased composition (low complexity). Disordered stretches follow at residues 1–71 (MSSP…FSSP) and 90–121 (TYGTPSSRVEGTPRSGVRGTPVRQRPDLGSAR). At S2 the chain carries N-acetylserine. S6 carries the post-translational modification Phosphoserine. 2 positions are modified to phosphothreonine: T7 and T19. A phosphoserine mark is found at S26, S31, and S32. The span at 61 to 71 (PPAQNALFSSP) shows a compositional bias: polar residues. T101 is modified (phosphothreonine). S104 is subject to Phosphoserine. Residue T109 is modified to Phosphothreonine. A phosphoserine mark is found at S119, S130, S141, and S144. K219 carries the N6-acetyllysine modification. Residue K438 forms a Glycyl lysine isopeptide (Lys-Gly) (interchain with G-Cter in SUMO2) linkage. K449 bears the N6-acetyllysine mark. The region spanning 457 to 666 (IYERLASALA…YDRRLAHHLV (210 aa)) is the MCM domain. Positions 470, 496, 515, 516, 617, 642, 731, and 734 each coordinate ATP. The Arginine finger motif lies at 641 to 644 (SRFD). A Glycyl lysine isopeptide (Lys-Gly) (interchain with G-Cter in SUMO2) cross-link involves residue K797. K857 bears the N6-acetyllysine mark.

The protein belongs to the MCM family. Component of the MCM2-7 complex. The complex forms a toroidal hexameric ring with the proposed subunit order MCM2-MCM6-MCM4-MCM7-MCM3-MCM5. Component of the CMG helicase complex, a hexameric ring of related MCM2-7 subunits stabilized by CDC45 and the tetrameric GINS complex. Interacts with MCMBP. In terms of processing, sumoylated; SUMO2 modified in response to stress caused by inhibition of proteasome activity (in vitro).

It localises to the nucleus. The protein localises to the chromosome. The catalysed reaction is ATP + H2O = ADP + phosphate + H(+). Acts as a component of the MCM2-7 complex (MCM complex) which is the replicative helicase essential for 'once per cell cycle' DNA replication initiation and elongation in eukaryotic cells. Core component of CDC45-MCM-GINS (CMG) helicase, the molecular machine that unwinds template DNA during replication, and around which the replisome is built. The active ATPase sites in the MCM2-7 ring are formed through the interaction surfaces of two neighboring subunits such that a critical structure of a conserved arginine finger motif is provided in trans relative to the ATP-binding site of the Walker A box of the adjacent subunit. The six ATPase active sites, however, are likely to contribute differentially to the complex helicase activity. The protein is DNA replication licensing factor MCM4 (Mcm4) of Mus musculus (Mouse).